A 145-amino-acid chain; its full sequence is Transcriptional regulator SlyA (145 aa).

The HTH marR-type domain occupies 2 to 135 (ELPLGSDLAR…LALLVSRLEK (134 aa)). A DNA-binding region (H-T-H motif) is located at residues 49-72 (QIQLAKAIGIEQPSLVRTLDQLEE).

This sequence belongs to the SlyA family. Homodimer.

In terms of biological role, transcription regulator that can specifically activate or repress expression of target genes. Regulates genes involved in production of antibiotic and exoenzyme virulence determinants in the phytopathogen. Required for the expression of the virulence protein evf during Drosophila melanogaster infection. In Pectobacterium carotovorum subsp. carotovorum (Erwinia carotovora subsp. carotovora), this protein is Transcriptional regulator SlyA.